Consider the following 955-residue polypeptide: Kinesin-like protein NACK2 (955 aa).

The region spanning 36–357 is the Kinesin motor domain; that stretch reads KILVTIRVRP…LCFATSAKEV (322 aa). 120–127 is an ATP binding site; the sequence is GQTSSGKT. Coiled-coil stretches lie at residues 366-443 and 566-604; these read VVAE…LKGS and KASL…VMHL.

It belongs to the TRAFAC class myosin-kinesin ATPase superfamily. Kinesin family. KIN-7 subfamily.

It is found in the cytoplasm. The protein localises to the nucleus. Its subcellular location is the cytoskeleton. It localises to the phragmoplast. Its function is as follows. Probable plus end-directed motor protein that may function in the NACK-PQR (NPK1-NQK1/MEK1-NRK1) MAP kinase signaling pathway, which is essential for somatic cell cytokinesis, especially for the cell-plate formation and its expansion. May regulate the activity and the localization of NPK1, probably by association through the non-catalytic region of the kinase. This Nicotiana tabacum (Common tobacco) protein is Kinesin-like protein NACK2 (NACK2).